We begin with the raw amino-acid sequence, 269 residues long: MASNLPMSPQLEQIHGEIRDHFRALANGFQRLDKIKDSTRQSKQLEELTDKMRECKRLVKEFDRELKDEEARNSPEVNKQLNDEKQSMIKELNSYVALRKTYMSTLGNKKVELFDMGAGVSGEPTAEENVQVASSMSNQELVDAGMKRMDETDQAIERSKQVVEQTLEVGTQTAANLKGQTDQMGRVVNHLDTIQFSIKKASQLVKEIGRQVATDKCIMGFLFLIVCGVVAIIIVKIVNPNNKDIRDIPGLAPPAQSRKLLYLRNQDYM.

Residues 1-217 (MASNLPMSPQ…IGRQVATDKC (217 aa)) are Cytoplasmic-facing. Positions 33–94 (DKIKDSTRQS…KQSMIKELNS (62 aa)) form a coiled coil. Serine 74 carries the phosphoserine modification. Residues 146–208 (MKRMDETDQA…KKASQLVKEI (63 aa)) enclose the t-SNARE coiled-coil homology domain. A helical; Anchor for type IV membrane protein membrane pass occupies residues 218-238 (IMGFLFLIVCGVVAIIIVKIV). Residues 239 to 269 (NPNNKDIRDIPGLAPPAQSRKLLYLRNQDYM) lie on the Vesicular side of the membrane.

The protein belongs to the novel plant SNARE family.

Its subcellular location is the membrane. Vesicle trafficking protein that functions in the secretory pathway. This Arabidopsis thaliana (Mouse-ear cress) protein is Novel plant SNARE 13 (NPSN13).